Reading from the N-terminus, the 166-residue chain is NADPH-dependent 7-cyano-7-deazaguanine reductase (166 aa).

C57 (thioimide intermediate) is an active-site residue. The Proton donor role is filled by D64. Substrate-binding positions include 79 to 81 (VES) and 98 to 99 (HE).

Belongs to the GTP cyclohydrolase I family. QueF type 1 subfamily.

It is found in the cytoplasm. It carries out the reaction 7-aminomethyl-7-carbaguanine + 2 NADP(+) = 7-cyano-7-deazaguanine + 2 NADPH + 3 H(+). Its pathway is tRNA modification; tRNA-queuosine biosynthesis. Functionally, catalyzes the NADPH-dependent reduction of 7-cyano-7-deazaguanine (preQ0) to 7-aminomethyl-7-deazaguanine (preQ1). The sequence is that of NADPH-dependent 7-cyano-7-deazaguanine reductase from Staphylococcus aureus (strain MRSA252).